A 234-amino-acid chain; its full sequence is Proteasome subunit alpha type-2 (234 aa).

Ala2 carries the N-acetylalanine modification. Tyr6 carries the phosphotyrosine modification. 3 positions are modified to phosphoserine: Ser7, Ser14, and Ser16. Position 24 is a phosphotyrosine (Tyr24). Lys70 bears the N6-acetyllysine mark. 2 positions are modified to phosphotyrosine: Tyr76 and Tyr121. Lys171 is modified (N6-acetyllysine).

This sequence belongs to the peptidase T1A family. As to quaternary structure, the 26S proteasome consists of a 20S proteasome core and two 19S regulatory subunits. The 20S proteasome core is a barrel-shaped complex made of 28 subunits that are arranged in four stacked rings. The two outer rings are each formed by seven alpha subunits, and the two inner rings are formed by seven beta subunits. The proteolytic activity is exerted by three beta-subunits PSMB5, PSMB6 and PSMB7. Phosphorylated on tyrosine residues; which may be important for nuclear import.

It is found in the cytoplasm. The protein localises to the nucleus. In terms of biological role, component of the 20S core proteasome complex involved in the proteolytic degradation of most intracellular proteins. This complex plays numerous essential roles within the cell by associating with different regulatory particles. Associated with two 19S regulatory particles, forms the 26S proteasome and thus participates in the ATP-dependent degradation of ubiquitinated proteins. The 26S proteasome plays a key role in the maintenance of protein homeostasis by removing misfolded or damaged proteins that could impair cellular functions, and by removing proteins whose functions are no longer required. Associated with the PA200 or PA28, the 20S proteasome mediates ubiquitin-independent protein degradation. This type of proteolysis is required in several pathways including spermatogenesis (20S-PA200 complex) or generation of a subset of MHC class I-presented antigenic peptides (20S-PA28 complex). This is Proteasome subunit alpha type-2 (PSMA2) from Bos taurus (Bovine).